A 302-amino-acid polypeptide reads, in one-letter code: Methionyl-tRNA formyltransferase (302 aa).

Residue 108-111 (SLLP) participates in (6S)-5,6,7,8-tetrahydrofolate binding.

Belongs to the Fmt family.

The catalysed reaction is L-methionyl-tRNA(fMet) + (6R)-10-formyltetrahydrofolate = N-formyl-L-methionyl-tRNA(fMet) + (6S)-5,6,7,8-tetrahydrofolate + H(+). In terms of biological role, attaches a formyl group to the free amino group of methionyl-tRNA(fMet). The formyl group appears to play a dual role in the initiator identity of N-formylmethionyl-tRNA by promoting its recognition by IF2 and preventing the misappropriation of this tRNA by the elongation apparatus. This is Methionyl-tRNA formyltransferase from Nitratiruptor sp. (strain SB155-2).